The following is a 349-amino-acid chain: Cbb3-type cytochrome c oxidase subunit CcoP (349 aa).

The disordered stretch occupies residues 1 to 67 (MADTDDEHAS…RVVRDRKGGR (67 aa)). At 1–96 (MADTDDEHAS…NPLPRWWLWT (96 aa)) the chain is on the cytoplasmic side. The segment covering 16 to 30 (NRIELERQAADEAHK) has biased composition (basic and acidic residues). A helical transmembrane segment spans residues 97–117 (FYATIVWGVLYLIAYPAIPLV). The Periplasmic portion of the chain corresponds to 118 to 349 (NGATQGLLGQ…AYVHSLGGGE (232 aa)). 2 Cytochrome c domains span residues 168-258 (YTAN…LELG) and 265-346 (ALAA…HSLG). Heme c-binding residues include Cys-181, Cys-184, His-185, Met-233, Cys-278, Cys-281, His-282, and Met-323.

Belongs to the CcoP / FixP family. As to quaternary structure, component of the cbb3-type cytochrome c oxidase at least composed of CcoN, CcoO, CcoQ and CcoP. Requires heme c as cofactor.

The protein localises to the cell inner membrane. It functions in the pathway energy metabolism; oxidative phosphorylation. Functionally, C-type cytochrome. Part of the cbb3-type cytochrome c oxidase complex. CcoP subunit is required for transferring electrons from donor cytochrome c via its heme groups to CcoO subunit. From there, electrons are shuttled to the catalytic binuclear center of CcoN subunit where oxygen reduction takes place. The complex also functions as a proton pump. The protein is Cbb3-type cytochrome c oxidase subunit CcoP of Paracoccus denitrificans (strain Pd 1222).